A 329-amino-acid chain; its full sequence is VSG expression site-associated protein 221A (329 aa).

The signal sequence occupies residues 1-23 (MKVEIVELVVLLFSVTCVDAWLQ). Residues asparagine 73, asparagine 294, and asparagine 308 are each glycosylated (N-linked (GlcNAc...) asparagine).

Functionally, not known but may be related to activation of the variant surface glycoprotein genes. The protein is VSG expression site-associated protein 221A of Trypanosoma brucei brucei.